Here is a 29-residue protein sequence, read N- to C-terminus: Cyclotide vibi-D (29 aa).

Positions 1–29 (GLPVCGETCFGGRCNTPGCTCSYPICTRN) form a cross-link, cyclopeptide (Gly-Asn). 3 disulfide bridges follow: cysteine 5–cysteine 19, cysteine 9–cysteine 21, and cysteine 14–cysteine 26.

This is a cyclic peptide.

In terms of biological role, probably participates in a plant defense mechanism. Has moderate levels of cytotoxic activity, active against a human lymphoma cell line with an IC(50) of &gt;30 uM. In Viola biflora (Yellow wood violet), this protein is Cyclotide vibi-D.